Consider the following 1168-residue polypeptide: DNA-directed RNA polymerase subunit beta (1168 aa).

The protein belongs to the RNA polymerase beta chain family. As to quaternary structure, the RNAP catalytic core consists of 2 alpha, 1 beta, 1 beta' and 1 omega subunit. When a sigma factor is associated with the core the holoenzyme is formed, which can initiate transcription.

The catalysed reaction is RNA(n) + a ribonucleoside 5'-triphosphate = RNA(n+1) + diphosphate. Its function is as follows. DNA-dependent RNA polymerase catalyzes the transcription of DNA into RNA using the four ribonucleoside triphosphates as substrates. The protein is DNA-directed RNA polymerase subunit beta of Corynebacterium kroppenstedtii (strain DSM 44385 / JCM 11950 / CIP 105744 / CCUG 35717).